The chain runs to 606 residues: Transcription factor glial cells missing 2 (606 aa).

Residues Asp20–Ser37 are compositionally biased toward polar residues. Disordered regions lie at residues Asp20 to Arg65, Glu475 to Tyr501, and Thr561 to His606. Low complexity predominate over residues Pro44–Gly61. The GCM DNA-binding region spans Arg65 to Phe224. The span at Phe490–Tyr501 shows a compositional bias: polar residues. A compositionally biased stretch (pro residues) spans Pro569–Thr580. Residues Tyr583–His593 are compositionally biased toward basic residues. Over residues Pro594 to His606 the composition is skewed to low complexity.

Expressed in glial lineages within embryonic procephalic mesoderm. Expression is highest in hemocyte primordia and longitudinal and nerve root ganglia.

It localises to the nucleus. Its function is as follows. Transcription factor with a minor role promoting glial cell differentiation and a more significant role in hematocyte differentiation. Gcm2, together with gcm, is required for the proliferation of plasmatocyte precursors, the expression of Croquemort protein, and the ability of plasmatocytes to convert into macrophages. The polypeptide is Transcription factor glial cells missing 2 (gcm2) (Drosophila melanogaster (Fruit fly)).